A 650-amino-acid polypeptide reads, in one-letter code: Putative pumilio homolog 7, chloroplastic (650 aa).

Disordered stretches follow at residues Met-1–Leu-22 and Asn-200–Ile-235. Residues Met-1–Lys-77 constitute a chloroplast transit peptide. Low complexity-rich tracts occupy residues Ser-8 to Leu-22 and Pro-217 to Gly-232. Residues Ser-308–Lys-650 form the PUM-HD domain. 8 Pumilio repeats span residues Asp-333–Asn-368, Glu-369–Leu-404, Glu-408–Lys-443, Ala-445–Asp-480, Ala-481–Ala-516, Glu-517–Ala-552, Gln-553–Ser-591, and His-594–Glu-625.

Its subcellular location is the plastid. The protein localises to the chloroplast. It is found in the cytoplasm. Its function is as follows. Sequence-specific RNA-binding protein that regulates translation and mRNA stability by binding the 3'-UTR of target mRNAs. The sequence is that of Putative pumilio homolog 7, chloroplastic (APUM7) from Arabidopsis thaliana (Mouse-ear cress).